The primary structure comprises 129 residues: uncharacterized protein (129 aa).

This is an uncharacterized protein from Clostridium perfringens (strain 13 / Type A).